The primary structure comprises 397 residues: Methylthioribose kinase (397 aa).

Residues Asn-44, Lys-61, and 115–117 (EDL) each bind ATP. Position 233 (Asp-233) interacts with substrate. 250–252 (DPE) contributes to the ATP binding site. Substrate is bound at residue Arg-340.

It belongs to the methylthioribose kinase family. Homodimer.

It carries out the reaction 5-(methylsulfanyl)-D-ribose + ATP = 5-(methylsulfanyl)-alpha-D-ribose 1-phosphate + ADP + H(+). Its pathway is amino-acid biosynthesis; L-methionine biosynthesis via salvage pathway; S-methyl-5-thio-alpha-D-ribose 1-phosphate from S-methyl-5'-thioadenosine (hydrolase route): step 2/2. Functionally, catalyzes the phosphorylation of methylthioribose into methylthioribose-1-phosphate. The chain is Methylthioribose kinase (mtnK) from Bacillus subtilis (strain 168).